Here is a 412-residue protein sequence, read N- to C-terminus: MSWDQVWIDINIATMDPSMNEAYGAITDAALAVKDGKIAWLGKRSDLPEFDVLATPVHRGHGGWLTPGLIDAHTHLVFAGNRANEFELRLQGASYEEIARAGGGIVSTVKACRDADEAELFDLARRRLNALAKEGVTTVEIKSGYGLDLDTELKLLRVARELGQHHHVDVVTTFLGAHAVPPEFKTLGEAGTDAYVDLVVNEMLPAVVAENLADAADVFCENIAFNLEQTERVLSAAKTLGLDIKLHAEQLSNLGGSELAARLGAKSVDHIEYLDEAGVKAIAQSGTCAVLLPGAFYFLRETKLPPIDLLRQYQVPMVLASDFNPGSSPICSTLLMLNMGCTLFRLTPEEALAGVTRNAARALGRDQRVGVLREGMEADFCLWRISTPAELAYSYGVNPLVDVVKGGRLIHQ.

Residues histidine 73 and histidine 75 each coordinate Fe(3+). Residues histidine 73 and histidine 75 each contribute to the Zn(2+) site. Residues arginine 82, tyrosine 145, and histidine 178 each contribute to the 4-imidazolone-5-propanoate site. Residue tyrosine 145 participates in N-formimidoyl-L-glutamate binding. Histidine 247 contacts Fe(3+). Position 247 (histidine 247) interacts with Zn(2+). Glutamine 250 lines the 4-imidazolone-5-propanoate pocket. Aspartate 322 contacts Fe(3+). Residue aspartate 322 participates in Zn(2+) binding. 2 residues coordinate N-formimidoyl-L-glutamate: asparagine 324 and glycine 326. 4-imidazolone-5-propanoate is bound at residue serine 327.

It belongs to the metallo-dependent hydrolases superfamily. HutI family. Requires Zn(2+) as cofactor. It depends on Fe(3+) as a cofactor.

It is found in the cytoplasm. It catalyses the reaction 4-imidazolone-5-propanoate + H2O = N-formimidoyl-L-glutamate. It functions in the pathway amino-acid degradation; L-histidine degradation into L-glutamate; N-formimidoyl-L-glutamate from L-histidine: step 3/3. Functionally, catalyzes the hydrolytic cleavage of the carbon-nitrogen bond in imidazolone-5-propanoate to yield N-formimidoyl-L-glutamate. It is the third step in the universal histidine degradation pathway. The protein is Imidazolonepropionase of Shewanella amazonensis (strain ATCC BAA-1098 / SB2B).